The chain runs to 99 residues: Bombyxin A-1 homolog (99 aa).

The first 19 residues, 1 to 19 (MKTQVLFLVFALAAVMVSG), serve as a signal peptide directing secretion. 3 cysteine pairs are disulfide-bonded: C27–C86, C39–C99, and C85–C90. The propeptide at 48 to 76 (TPYISPENEGYGWRWLEPQRARQLDGARG) is c peptide like.

Belongs to the insulin family. Heterodimer of a B chain and an A chain linked by two disulfide bonds.

It is found in the secreted. In terms of biological role, brain peptide responsible for activation of prothoracic glands to produce ecdysone in insects. This is Bombyxin A-1 homolog (SBXA1) from Samia cynthia (Ailanthus silkmoth).